The following is a 97-amino-acid chain: Acylphosphatase (97 aa).

Residues 3–97 (KVKMIVSGRV…PDFTDFNIKY (95 aa)) form the Acylphosphatase-like domain. Residues Arg-18 and Asn-36 contribute to the active site.

The protein belongs to the acylphosphatase family.

The enzyme catalyses an acyl phosphate + H2O = a carboxylate + phosphate + H(+). This is Acylphosphatase (acyP) from Lactococcus lactis subsp. lactis (strain IL1403) (Streptococcus lactis).